The primary structure comprises 382 residues: UDP-4-amino-4-deoxy-L-arabinose--oxoglutarate aminotransferase (382 aa).

Residue Lys183 is modified to N6-(pyridoxal phosphate)lysine.

Belongs to the DegT/DnrJ/EryC1 family. ArnB subfamily. Homodimer. The cofactor is pyridoxal 5'-phosphate.

The catalysed reaction is UDP-4-amino-4-deoxy-beta-L-arabinose + 2-oxoglutarate = UDP-beta-L-threo-pentopyranos-4-ulose + L-glutamate. Its pathway is nucleotide-sugar biosynthesis; UDP-4-deoxy-4-formamido-beta-L-arabinose biosynthesis; UDP-4-deoxy-4-formamido-beta-L-arabinose from UDP-alpha-D-glucuronate: step 2/3. It functions in the pathway bacterial outer membrane biogenesis; lipopolysaccharide biosynthesis. Functionally, catalyzes the conversion of UDP-4-keto-arabinose (UDP-Ara4O) to UDP-4-amino-4-deoxy-L-arabinose (UDP-L-Ara4N). The modified arabinose is attached to lipid A and is required for resistance to polymyxin and cationic antimicrobial peptides. The sequence is that of UDP-4-amino-4-deoxy-L-arabinose--oxoglutarate aminotransferase from Pseudomonas aeruginosa (strain ATCC 15692 / DSM 22644 / CIP 104116 / JCM 14847 / LMG 12228 / 1C / PRS 101 / PAO1).